Here is a 543-residue protein sequence, read N- to C-terminus: Glutamyl-tRNA(Gln) amidotransferase subunit A, chloroplastic/mitochondrial (543 aa).

Active-site charge relay system residues include K123 and S198. S222 (acyl-ester intermediate) is an active-site residue.

It belongs to the amidase family. GatA subfamily. In terms of assembly, subunit of the heterotrimeric GatCAB amidotransferase (AdT) complex, composed of A, B and C subunits.

It localises to the mitochondrion. The protein resides in the plastid. Its subcellular location is the chloroplast stroma. It catalyses the reaction L-glutamyl-tRNA(Gln) + L-glutamine + ATP + H2O = L-glutaminyl-tRNA(Gln) + L-glutamate + ADP + phosphate + H(+). In terms of biological role, allows the formation of correctly charged Gln-tRNA(Gln) through the transamidation of misacylated Glu-tRNA(Gln) in chloroplasts and mitochondria. The reaction takes place in the presence of glutamine and ATP through an activated gamma-phospho-Glu-tRNA(Gln). The chain is Glutamyl-tRNA(Gln) amidotransferase subunit A, chloroplastic/mitochondrial from Oryza sativa subsp. indica (Rice).